We begin with the raw amino-acid sequence, 26 residues long: Dermaseptin-J4 (26 aa).

Val26 carries the post-translational modification Valine amide.

Expressed by the skin glands.

The protein localises to the secreted. Has antimicrobial activity. In Phasmahyla jandaia (Jandaia leaf frog), this protein is Dermaseptin-J4.